Reading from the N-terminus, the 96-residue chain is Integration host factor subunit alpha (96 aa).

This sequence belongs to the bacterial histone-like protein family. In terms of assembly, heterodimer of an alpha and a beta chain.

Its function is as follows. This protein is one of the two subunits of integration host factor, a specific DNA-binding protein that functions in genetic recombination as well as in transcriptional and translational control. This is Integration host factor subunit alpha from Haemophilus influenzae (strain 86-028NP).